A 357-amino-acid chain; its full sequence is DNA integrity scanning protein DisA (357 aa).

The 139-residue stretch at 3–141 folds into the DAC domain; that stretch reads RPTLRETVAR…GGERHVVADS (139 aa). ATP is bound by residues Gly70, Leu88, and 101–105; that span reads TRHRS.

The protein belongs to the DisA family. Homooctamer. Mg(2+) is required as a cofactor.

The enzyme catalyses 2 ATP = 3',3'-c-di-AMP + 2 diphosphate. Its function is as follows. Participates in a DNA-damage check-point. DisA forms globular foci that rapidly scan along the chromosomes searching for lesions. In terms of biological role, also has diadenylate cyclase activity, catalyzing the condensation of 2 ATP molecules into cyclic di-AMP (c-di-AMP). c-di-AMP likely acts as a signaling molecule that may couple DNA integrity with a cellular process. The sequence is that of DNA integrity scanning protein DisA from Mycobacterium avium (strain 104).